The following is a 448-amino-acid chain: Leukocyte immunoglobulin-like receptor subfamily B member 4 (448 aa).

The first 21 residues, 1-21 (MIPTFTALLCLGLSLGPRTHM), serve as a signal peptide directing secretion. Residues 22 to 259 (QAGPLPKPTL…PHSGLRRHWE (238 aa)) lie on the Extracellular side of the membrane. Ig-like C2-type domains lie at 27 to 118 (PKPT…LVMT) and 124 to 218 (PTLS…LIVS). 2 cysteine pairs are disulfide-bonded: Cys-49-Cys-98 and Cys-144-Cys-195. Positions 217–248 (VSGSLEDPRPSPTRSVSTAAGPEDQPLMPTGS) are disordered. Residues 260–280 (VLIGVLVVSILLLSLLLFLLL) traverse the membrane as a helical segment. Residues 281–448 (QHWRQGKHRT…PSVYATLAIH (168 aa)) are Cytoplasmic-facing. The segment at 297–448 (DFQRPPGAAE…PSVYATLAIH (152 aa)) is disordered. Ser-319 is modified (phosphoserine). Residues 344 to 354 (MDTRQSPHDED) are compositionally biased toward basic and acidic residues. Residues 358 to 363 (VTYAKV) carry the ITIM motif 1 motif. A compositionally biased stretch (basic and acidic residues) spans 384 to 398 (LDTKDRQAEEDRQMD). Short sequence motifs (ITIM motif) lie at residues 410 to 415 (VTYAQL) and 440 to 445 (SVYATL).

Interacts with PTPN6. Detected on monocytes, macrophages, dendritic cells, natural killer cells and B-cells (at protein level). Expressed in the lung.

It is found in the cell membrane. In terms of biological role, inhibitory receptor involved in the down-regulation of the immune response and the development of immune tolerance. Receptor for FN1. Receptor for apolipoprotein APOE. Receptor for ALCAM/CD166. Inhibits receptor-mediated phosphorylation of cellular proteins and mobilization of intracellular calcium ions. Inhibits FCGR1A/CD64-mediated monocyte activation by inducing phosphatase-mediated down-regulation of the phosphorylation of multiple proteins including LCK, SYK, LAT and ERK, leading to a reduction in TNF production. This inhibition of monocyte activation occurs at least in part via binding to FN1. Inhibits T cell proliferation, inducing anergy, suppressing the differentiation of IFNG-producing CD8+ cytotoxic T cells and enhancing the generation of CD8+ T suppressor cells. Induces up-regulation of CD86 on dendritic cells. Interferes with TNFRSF5-signaling and NF-kappa-B up-regulation. This is Leukocyte immunoglobulin-like receptor subfamily B member 4 (LILRB4) from Homo sapiens (Human).